Consider the following 634-residue polypeptide: 1-deoxy-D-xylulose-5-phosphate synthase (634 aa).

Thiamine diphosphate-binding positions include histidine 73 and 114 to 116 (GHS). Residue aspartate 145 participates in Mg(2+) binding. Thiamine diphosphate contacts are provided by residues 146-147 (GS), asparagine 174, phenylalanine 285, and glutamate 367. Asparagine 174 contacts Mg(2+).

This sequence belongs to the transketolase family. DXPS subfamily. As to quaternary structure, homodimer. Mg(2+) is required as a cofactor. It depends on thiamine diphosphate as a cofactor.

The catalysed reaction is D-glyceraldehyde 3-phosphate + pyruvate + H(+) = 1-deoxy-D-xylulose 5-phosphate + CO2. The protein operates within metabolic intermediate biosynthesis; 1-deoxy-D-xylulose 5-phosphate biosynthesis; 1-deoxy-D-xylulose 5-phosphate from D-glyceraldehyde 3-phosphate and pyruvate: step 1/1. In terms of biological role, catalyzes the acyloin condensation reaction between C atoms 2 and 3 of pyruvate and glyceraldehyde 3-phosphate to yield 1-deoxy-D-xylulose-5-phosphate (DXP). The sequence is that of 1-deoxy-D-xylulose-5-phosphate synthase from Syntrophotalea carbinolica (strain DSM 2380 / NBRC 103641 / GraBd1) (Pelobacter carbinolicus).